A 451-amino-acid chain; its full sequence is UPF0210 protein NMCC_1554 (451 aa).

This sequence belongs to the UPF0210 family. As to quaternary structure, homodimer.

The chain is UPF0210 protein NMCC_1554 from Neisseria meningitidis serogroup C (strain 053442).